The following is a 395-amino-acid chain: 8-amino-7-oxononanoate synthase/2-amino-3-ketobutyrate coenzyme A ligase (395 aa).

Position 110–111 (110–111 (GF)) interacts with pyridoxal 5'-phosphate. Residue H135 participates in substrate binding. Residues S182, 207 to 210 (DDAH), and 239 to 242 (TLSK) each bind pyridoxal 5'-phosphate. At K242 the chain carries N6-(pyridoxal phosphate)lysine. Position 356 (T356) interacts with substrate.

Belongs to the class-II pyridoxal-phosphate-dependent aminotransferase family. Homodimer. Pyridoxal 5'-phosphate is required as a cofactor.

The enzyme catalyses 6-carboxyhexanoyl-[ACP] + L-alanine + H(+) = (8S)-8-amino-7-oxononanoate + holo-[ACP] + CO2. It catalyses the reaction glycine + acetyl-CoA = (2S)-2-amino-3-oxobutanoate + CoA. It functions in the pathway cofactor biosynthesis; biotin biosynthesis. Its function is as follows. Catalyzes the decarboxylative condensation of pimeloyl-[acyl-carrier protein] and L-alanine to produce 8-amino-7-oxononanoate (AON), [acyl-carrier protein], and carbon dioxide. Can also use pimeloyl-CoA instead of pimeloyl-ACP as substrate. It also converts 2-amino-3-ketobutyrate and CoA to glycine and acetyl-CoA. Activity is also observed with the following combinations of substrates: acetyl-CoA and either L-alanine or L-serine, pimeloyl-CoA and either glycine or L-serine, and palmitoyl-CoA with L-alanine. This Thermus thermophilus (strain ATCC 27634 / DSM 579 / HB8) protein is 8-amino-7-oxononanoate synthase/2-amino-3-ketobutyrate coenzyme A ligase.